A 284-amino-acid chain; its full sequence is MSALNDKSVDNGRIARRFAALKAEGRAGLVTFITAGDPDLETCRAVLHGLPAAGADLIELGLPFSDPMADGPAIQAASLRALHAGTTARKTLDLVRGFRETDADTPVILMGYYNPIHAYGVDRFLADAIEAGVDGLIVVDLPPEEDEELCIPALKAGVNFIRLATPTTDDKRLPAVLQNTSGFVYYVSIAGITGAASADNAAVGAAVERLKRHTDLPVAVGFGIKTPEQAAEVARVADAAVVGSAIVTRLAGGLDADGKARPGLAEDVLGFVRELAGGVRGAAF.

Residues E59 and D70 each act as proton acceptor in the active site.

Belongs to the TrpA family. Tetramer of two alpha and two beta chains.

It carries out the reaction (1S,2R)-1-C-(indol-3-yl)glycerol 3-phosphate + L-serine = D-glyceraldehyde 3-phosphate + L-tryptophan + H2O. Its pathway is amino-acid biosynthesis; L-tryptophan biosynthesis; L-tryptophan from chorismate: step 5/5. Its function is as follows. The alpha subunit is responsible for the aldol cleavage of indoleglycerol phosphate to indole and glyceraldehyde 3-phosphate. The polypeptide is Tryptophan synthase alpha chain (Azospirillum brasilense).